Here is a 340-residue protein sequence, read N- to C-terminus: Biotin synthase (340 aa).

In terms of domain architecture, Radical SAM core spans 45–272 (NAVQVSTLLS…ASYVRLSAGR (228 aa)). [4Fe-4S] cluster-binding residues include cysteine 60, cysteine 64, and cysteine 67. [2Fe-2S] cluster contacts are provided by cysteine 104, cysteine 135, cysteine 195, and arginine 267.

The protein belongs to the radical SAM superfamily. Biotin synthase family. Homodimer. Requires [4Fe-4S] cluster as cofactor. [2Fe-2S] cluster serves as cofactor.

The enzyme catalyses (4R,5S)-dethiobiotin + (sulfur carrier)-SH + 2 reduced [2Fe-2S]-[ferredoxin] + 2 S-adenosyl-L-methionine = (sulfur carrier)-H + biotin + 2 5'-deoxyadenosine + 2 L-methionine + 2 oxidized [2Fe-2S]-[ferredoxin]. It participates in cofactor biosynthesis; biotin biosynthesis; biotin from 7,8-diaminononanoate: step 2/2. Its function is as follows. Catalyzes the conversion of dethiobiotin (DTB) to biotin by the insertion of a sulfur atom into dethiobiotin via a radical-based mechanism. The sequence is that of Biotin synthase from Thioalkalivibrio sulfidiphilus (strain HL-EbGR7).